The sequence spans 411 residues: 4-coumarate--CoA ligase (411 aa).

This sequence belongs to the ATP-dependent AMP-binding enzyme family.

It carries out the reaction (E)-4-coumarate + ATP + CoA = (E)-4-coumaroyl-CoA + AMP + diphosphate. Its function is as follows. Converts p-coumaric acid into p-coumaryl CoA. This is necessary for the activation of the photoactive yellow protein (PYP) chromophore. This chain is 4-coumarate--CoA ligase (pcl), found in Cereibacter sphaeroides (strain ATCC 17023 / DSM 158 / JCM 6121 / CCUG 31486 / LMG 2827 / NBRC 12203 / NCIMB 8253 / ATH 2.4.1.) (Rhodobacter sphaeroides).